The sequence spans 97 residues: Small ribosomal subunit protein bS20 (97 aa).

The span at 76-85 (RNNGARKKAG) shows a compositional bias: basic residues. Positions 76 to 97 (RNNGARKKAGLAKALQKVSQAS) are disordered. Residues 86 to 97 (LAKALQKVSQAS) are compositionally biased toward low complexity.

The protein belongs to the bacterial ribosomal protein bS20 family.

Binds directly to 16S ribosomal RNA. The polypeptide is Small ribosomal subunit protein bS20 (Microcystis aeruginosa (strain NIES-843 / IAM M-2473)).